Consider the following 113-residue polypeptide: uncharacterized protein (113 aa).

Transmembrane regions (helical) follow at residues 1–21 (MLIA…FGTW) and 48–68 (IMLA…ALIV).

The protein to M.tuberculosis Rv0039.

The protein localises to the cell membrane. This is an uncharacterized protein from Mycobacterium leprae (strain TN).